The chain runs to 689 residues: Protein-glutamine gamma-glutamyltransferase 2 (689 aa).

Active-site residues include C278, H336, and D359. N399, D401, E437, E447, and E452 together coordinate Ca(2+). The interval 427–453 (STKSVGRDSREDITHTYKYPEGSEKER) is disordered. The segment covering 431 to 441 (VGRDSREDITH) has biased composition (basic and acidic residues). 476-483 (RIKLSEGA) is a binding site for GTP. E539 is a Ca(2+) binding site. 580–583 (RDVY) contributes to the GTP binding site.

Belongs to the transglutaminase superfamily. Transglutaminase family. As to quaternary structure, monomer. Ca(2+) is required as a cofactor. Predominates in mature erythrocytes. Also found in kidney and cardiac muscle.

The protein localises to the cytoplasm. The protein resides in the cytosol. Its subcellular location is the nucleus. It is found in the chromosome. It localises to the secreted. The protein localises to the extracellular space. The protein resides in the extracellular matrix. Its subcellular location is the cell membrane. It is found in the mitochondrion. It carries out the reaction L-glutaminyl-[protein] + L-lysyl-[protein] = [protein]-L-lysyl-N(6)-5-L-glutamyl-[protein] + NH4(+). The enzyme catalyses L-glutaminyl-[protein] + serotonin = 5-serotonyl-L-glutamyl-[protein] + NH4(+). The catalysed reaction is L-glutaminyl-[protein] + dopamine = 5-dopaminyl-L-glutamyl-[protein] + NH4(+). It catalyses the reaction L-glutaminyl-[protein] + histamine = 5-histaminyl-L-glutamyl-[protein] + NH4(+). It carries out the reaction L-glutaminyl-[protein] + (R)-noradrenaline = 5-(R)-noradrenalinyl-L-glutamyl-[protein] + NH4(+). The enzyme catalyses L-glutaminyl-[protein] + H2O = L-glutamyl-[protein] + NH4(+). Its activity is regulated as follows. Acyltransferase activity is regulated by the binding of GTP and Ca(2+): inactivated by GTP, which stabilizes its closed structure, thereby obstructing the accessibility of substrates to the active sites. In contrast, Ca(2+) acts as a cofactor by inducing conformational change to the active open form. In absence of Ca(2+), Mg(2+) may bind Ca(2+)-binding sites, promoting GTP-binding and subsequent inhibition of the acyltransferase activity. Its function is as follows. Calcium-dependent acyltransferase that catalyzes the formation of covalent bonds between peptide-bound glutamine and various primary amines, such as gamma-amino group of peptide-bound lysine, or mono- and polyamines, thereby producing cross-linked or aminated proteins, respectively. Involved in many biological processes, such as bone development, angiogenesis, wound healing, cellular differentiation, chromatin modification and apoptosis. Acts as a protein-glutamine gamma-glutamyltransferase by mediating the cross-linking of proteins: under physiological conditions, the protein cross-linking activity is inhibited by GTP; inhibition is relieved by Ca(2+) in response to various stresses. When secreted, catalyzes cross-linking of proteins of the extracellular matrix, resulting in the formation of scaffolds. Plays a key role during apoptosis, both by (1) promoting the cross-linking of cytoskeletal proteins resulting in condensation of the cytoplasm, and by (2) mediating cross-linking proteins of the extracellular matrix, resulting in the irreversible formation of scaffolds that stabilize the integrity of the dying cells before their clearance by phagocytosis, thereby preventing the leakage of harmful intracellular components. In addition to protein cross-linking, can use different monoamine substrates to catalyze a vast array of protein post-translational modifications: mediates aminylation of serotonin, dopamine, noradrenaline or histamine into glutamine residues of target proteins to generate protein serotonylation, dopaminylation, noradrenalinylation or histaminylation, respectively. Mediates protein serotonylation of small GTPases during activation and aggregation of platelets, leading to constitutive activation of these GTPases. Plays a key role in chromatin organization by mediating serotonylation and dopaminylation of histone H3. Catalyzes serotonylation of 'Gln-5' of histone H3 (H3Q5ser) during serotonergic neuron differentiation, thereby facilitating transcription. Acts as a mediator of neurotransmission-independent role of nuclear dopamine in ventral tegmental area (VTA) neurons: catalyzes dopaminylation of 'Gln-5' of histone H3 (H3Q5dop), thereby regulating relapse-related transcriptional plasticity in the reward system. Also acts as a protein deamidase by mediating the side chain deamidation of specific glutamine residues of proteins to glutamate. May also act as an isopeptidase cleaving the previously formed cross-links. Also able to participate in signaling pathways independently of its acyltransferase activity: acts as a signal transducer in alpha-1 adrenergic receptor-mediated stimulation of phospholipase C-delta (PLCD) activity and is required for coupling alpha-1 adrenergic agonists to the stimulation of phosphoinositide lipid metabolism. In Gallus gallus (Chicken), this protein is Protein-glutamine gamma-glutamyltransferase 2.